Here is a 172-residue protein sequence, read N- to C-terminus: Ribosome maturation factor RimM (172 aa).

The PRC barrel domain occupies 97-170 (DDEYYYDEII…LITIDVLEGL (74 aa)).

Belongs to the RimM family. Binds ribosomal protein uS19.

Its subcellular location is the cytoplasm. Its function is as follows. An accessory protein needed during the final step in the assembly of 30S ribosomal subunit, possibly for assembly of the head region. Essential for efficient processing of 16S rRNA. May be needed both before and after RbfA during the maturation of 16S rRNA. It has affinity for free ribosomal 30S subunits but not for 70S ribosomes. In Leuconostoc citreum (strain KM20), this protein is Ribosome maturation factor RimM.